The chain runs to 365 residues: Peptide chain release factor 2 (365 aa).

N5-methylglutamine is present on glutamine 252.

Belongs to the prokaryotic/mitochondrial release factor family. In terms of processing, methylated by PrmC. Methylation increases the termination efficiency of RF2.

The protein localises to the cytoplasm. In terms of biological role, peptide chain release factor 2 directs the termination of translation in response to the peptide chain termination codons UGA and UAA. The sequence is that of Peptide chain release factor 2 from Aliivibrio fischeri (strain ATCC 700601 / ES114) (Vibrio fischeri).